The primary structure comprises 305 residues: uncharacterized protein (305 aa).

The protein belongs to the IIV-6 436R family.

This is an uncharacterized protein from Acheta domesticus (House cricket).